A 266-amino-acid chain; its full sequence is Sec-independent protein translocase protein TatC (266 aa).

Helical transmembrane passes span 28-48, 93-113, 134-154, 183-203, 221-241, and 242-262; these read MIIA…YILF, FNIY…PYIF, GIIM…YFIL, LIMH…FIYF, HAFL…IFST, and IVVL…SFYV.

The protein belongs to the TatC family. In terms of assembly, forms a complex with TatA.

It is found in the cell inner membrane. In terms of biological role, part of the twin-arginine translocation (Tat) system that transports large folded proteins containing a characteristic twin-arginine motif in their signal peptide across membranes. The sequence is that of Sec-independent protein translocase protein TatC from Blattabacterium sp. subsp. Periplaneta americana (strain BPLAN) (Periplaneta americana symbiotic bacterium).